A 264-amino-acid chain; its full sequence is Thiazole synthase (264 aa).

The active-site Schiff-base intermediate with DXP is Lys-106. 1-deoxy-D-xylulose 5-phosphate contacts are provided by residues Gly-167, 193 to 194 (AG), and 215 to 216 (NS).

The protein belongs to the ThiG family. Homotetramer. Forms heterodimers with either ThiH or ThiS.

It localises to the cytoplasm. The enzyme catalyses [ThiS sulfur-carrier protein]-C-terminal-Gly-aminoethanethioate + 2-iminoacetate + 1-deoxy-D-xylulose 5-phosphate = [ThiS sulfur-carrier protein]-C-terminal Gly-Gly + 2-[(2R,5Z)-2-carboxy-4-methylthiazol-5(2H)-ylidene]ethyl phosphate + 2 H2O + H(+). It functions in the pathway cofactor biosynthesis; thiamine diphosphate biosynthesis. Its function is as follows. Catalyzes the rearrangement of 1-deoxy-D-xylulose 5-phosphate (DXP) to produce the thiazole phosphate moiety of thiamine. Sulfur is provided by the thiocarboxylate moiety of the carrier protein ThiS. In vitro, sulfur can be provided by H(2)S. This Pseudomonas fluorescens (strain SBW25) protein is Thiazole synthase.